The chain runs to 86 residues: Kappa-theraphotoxin-Cg1a 2 (86 aa).

The signal sequence occupies residues 1–21; that stretch reads MKVSVVITLAVLGVMFVWASA. The propeptide occupies 22 to 50; sequence AELEERGSDQRDSPAWLKSMERIFQSEER. Cystine bridges form between C52/C66, C59/C71, and C65/C78. At F84 the chain carries Phenylalanine amide.

This sequence belongs to the neurotoxin 10 (Hwtx-1) family. 28 (Jztx-11) subfamily. As to expression, expressed by the venom gland.

The protein localises to the secreted. Functionally, this toxin acts as a voltage-dependent gating-modifier. It inhibits the sodium conductance (IC(50)=124 nM) and slows the fast inactivation (EC(50)=1180 nM) of Nav1.5/SCN5A. It significantly shifts the activation to more depolarized voltages and decreases the deactivation of Nav1.5 currents upon extreme depolarization, but only slightly affects voltage-dependence of steady-state inactivation. In addition, this toxin causes an approximately five-fold decrease in the rate of recovery from inactivation and an approximately 1.9-fold reduction in the closed-state inactivation rate. This toxin integrates the functions of site 3 toxins (alpha-scorpion toxins) with site 4 toxins (beta-scorpion and spider toxins) by targeting multiple sites on Nav1.5. Also shows inhibition of voltage-gated potassium channels (5 uM completely inhibits Kv2.1/KCNB1, whereas 5 uM moderately inhibits Kv4.2/KCND2 Kv4.1/KCND1 channels). The chain is Kappa-theraphotoxin-Cg1a 2 from Chilobrachys guangxiensis (Chinese earth tiger tarantula).